Consider the following 240-residue polypeptide: Ribosomal RNA large subunit methyltransferase E (240 aa).

Residues 1 to 13 (MAKKPGSQNTSGR) are compositionally biased toward polar residues. The disordered stretch occupies residues 1–20 (MAKKPGSQNTSGRGQRDLKV). Residues glycine 85, tryptophan 87, aspartate 113, aspartate 129, and aspartate 153 each contribute to the S-adenosyl-L-methionine site. The Proton acceptor role is filled by lysine 193.

Belongs to the class I-like SAM-binding methyltransferase superfamily. RNA methyltransferase RlmE family.

Its subcellular location is the cytoplasm. The catalysed reaction is uridine(2552) in 23S rRNA + S-adenosyl-L-methionine = 2'-O-methyluridine(2552) in 23S rRNA + S-adenosyl-L-homocysteine + H(+). In terms of biological role, specifically methylates the uridine in position 2552 of 23S rRNA at the 2'-O position of the ribose in the fully assembled 50S ribosomal subunit. In Roseobacter denitrificans (strain ATCC 33942 / OCh 114) (Erythrobacter sp. (strain OCh 114)), this protein is Ribosomal RNA large subunit methyltransferase E.